A 198-amino-acid chain; its full sequence is Large ribosomal subunit protein eL18 (198 aa).

The disordered stretch occupies residues 157 to 198 (RHFGASGVPGSHSKPYATNRGKETKRGRRTGRSYKRKAFRHV). Residues 179-198 (ETKRGRRTGRSYKRKAFRHV) show a composition bias toward basic residues.

It belongs to the eukaryotic ribosomal protein eL18 family.

It is found in the cytoplasm. The chain is Large ribosomal subunit protein eL18 (RPL18-A) from Leishmania major.